Reading from the N-terminus, the 252-residue chain is Probable transcriptional regulatory protein Ava_1228 (252 aa).

The protein belongs to the TACO1 family.

It localises to the cytoplasm. This Trichormus variabilis (strain ATCC 29413 / PCC 7937) (Anabaena variabilis) protein is Probable transcriptional regulatory protein Ava_1228.